A 550-amino-acid polypeptide reads, in one-letter code: Beta-fructofuranosidase, insoluble isoenzyme CWINV6 (550 aa).

Residues 28-31 (WLND), glutamine 47, 92-93 (WS), 157-158 (RD), and glutamate 214 each bind substrate. Residue aspartate 31 is part of the active site. Residues asparagine 235 and asparagine 272 are each glycosylated (N-linked (GlcNAc...) asparagine).

It belongs to the glycosyl hydrolase 32 family. In terms of tissue distribution, expressed in seedlings and leaves, and, to a lower extent, in flowers and seeds.

It is found in the secreted. The protein localises to the extracellular space. Its subcellular location is the apoplast. The protein resides in the cell wall. It carries out the reaction Hydrolysis of terminal, non-reducing (2-&gt;1)- and (2-&gt;6)-linked beta-D-fructofuranose residues in fructans.. 6 and 1-fructan exohydrolase that can degrade both inulin and levan-type fructans, such as phlein, levan, neokestose, levanbiose, 6-kestose, 1-kestose, inulin, and 1,1-nystose. This Arabidopsis thaliana (Mouse-ear cress) protein is Beta-fructofuranosidase, insoluble isoenzyme CWINV6 (CWINV6).